The following is a 261-amino-acid chain: Zinc import ATP-binding protein ZnuC (261 aa).

An ABC transporter domain is found at 6–221 (IRLEQVGVTF…PAFVELFGKN (216 aa)). 38–45 (GPNGAGKT) is an ATP binding site.

The protein belongs to the ABC transporter superfamily. Zinc importer (TC 3.A.1.15.5) family. The complex is composed of two ATP-binding proteins (ZnuC), two transmembrane proteins (ZnuB) and a solute-binding protein (ZnuA).

The protein localises to the cell inner membrane. It catalyses the reaction Zn(2+)(out) + ATP(in) + H2O(in) = Zn(2+)(in) + ADP(in) + phosphate(in) + H(+)(in). Part of the ABC transporter complex ZnuABC involved in zinc import. Responsible for energy coupling to the transport system. This chain is Zinc import ATP-binding protein ZnuC, found in Pseudomonas fluorescens (strain ATCC BAA-477 / NRRL B-23932 / Pf-5).